The chain runs to 100 residues: Apolipoprotein C-II (100 aa).

An N-terminal signal peptide occupies residues 1-22; sequence MGSRFLLALFLVLLVLGCEVQA. The tract at residues 66–74 is lipid binding; it reads SVDEKLRDM. A lipoprotein lipase cofactor region spans residues 78 to 100; sequence SSAAMTTYASIFTDQILTLLKGE.

The protein belongs to the apolipoprotein C2 family. Proapolipoprotein C-II is synthesized as a sialic acid containing glycoprotein which is subsequently desialylated prior to its proteolytic processing. Post-translationally, proapolipoprotein C-II, the major form found in plasma undergoes proteolytic cleavage of its N-terminal hexapeptide to generate the mature form apolipoprotein C-II, which occurs as the minor form in plasma.

The protein resides in the secreted. In terms of biological role, component of chylomicrons, very low-density lipoproteins (VLDL), low-density lipoproteins (LDL), and high-density lipoproteins (HDL) in plasma. Plays an important role in lipoprotein metabolism as an activator of lipoprotein lipase. The chain is Apolipoprotein C-II (APOC2) from Ellobius talpinus (Northern mole vole).